Here is a 362-residue protein sequence, read N- to C-terminus: tRNA-specific 2-thiouridylase MnmA 3 (362 aa).

ATP-binding positions include 11–18 and Met37; that span reads GMSGGIDS. Cys91 serves as the catalytic Nucleophile. A disulfide bond links Cys91 and Cys188. Gly115 lines the ATP pocket. An interaction with tRNA region spans residues 137–139; that stretch reads KDQ. Cys188 (cysteine persulfide intermediate) is an active-site residue. Residues 296–297 form an interaction with tRNA region; that stretch reads RY.

It belongs to the MnmA/TRMU family.

The protein localises to the cytoplasm. It carries out the reaction S-sulfanyl-L-cysteinyl-[protein] + uridine(34) in tRNA + AH2 + ATP = 2-thiouridine(34) in tRNA + L-cysteinyl-[protein] + A + AMP + diphosphate + H(+). Its function is as follows. Catalyzes the 2-thiolation of uridine at the wobble position (U34) of tRNA, leading to the formation of s(2)U34. The protein is tRNA-specific 2-thiouridylase MnmA 3 of Bacteroides fragilis (strain ATCC 25285 / DSM 2151 / CCUG 4856 / JCM 11019 / LMG 10263 / NCTC 9343 / Onslow / VPI 2553 / EN-2).